The sequence spans 883 residues: MSPSFSGAAIRQAFLDFYAQRGHQVLPSASLVPEDPTVLLTIAGMLPFKPIFLGHQDPQYPRVTTAQKCVRTNDIENVGRTARHHTFFEMLGNFSFGDYFKKEAITWAWELVTEVFGLPPERLVVSVFREDEEAFALWRDAIGIPPHRIRRMGEEDNFWAAGPTGPCGPCSEIYYDFKPELGDEQIDLGDDSRFLEIYNLVFMELNRDSEGRLTPLARQNIDTGLGLERLAQVLQGVPNNYETDLIFPIVQKAAEIARVDYFQASPEQKVSLKVIGDHARAVMHLIADGVIPSNVDRGYVLRRLIRRMVRHGRLLGIGEPFTLPVVETAIQLAEAAYPEVREREAVIKAELQREEEQFLKTLERGERLLFDLFANVTASGAPKQISGADAFKLFDTYGFPLELTQEIAQERGFSVDVQGFEQEMEKQRQRARAAHQTLDVTAQGSLDELAEFLIETEFLGYSQSSARGVVEALLVEGKSVPQVEAGQSVQVVLDRTPFYAESGGQIGDRGYLAGDGVLVRVEDVQKRGDLFVHFGWVERGILRVGDPVQAQIDLACRRRAQAHHTATHLLQAALKKVVDPSISQAGSLVAFDRLRFDFTLSRPLTPEELQQVEDLVNTWIAEAHPAQVSIMPLAEAKARGAIAMFGEKYGAEVRVVDFPGVSMELCGGTHVSNTAEIGLFKIISESGVAAGIRRIEAVAGPAVLEYLNERDSVVRELSAQFKAKPQEIPERVAALQAELKAAQRALEEARSQLALLQAERLLPQAVAVGNLQILAAELGSTPPEALKTAAEHLLHKLGEGAVVLGSVPEAGKVSLVAAFSPAVQKLGLKAGSFIGEIAKLTGGGGGGRPNLAQAGGKQPEKLAQALQVAQERLQAELSSGLGS.

Residues His-564, His-568, Cys-666, and His-670 each coordinate Zn(2+).

The protein belongs to the class-II aminoacyl-tRNA synthetase family. Requires Zn(2+) as cofactor.

The protein resides in the cytoplasm. The enzyme catalyses tRNA(Ala) + L-alanine + ATP = L-alanyl-tRNA(Ala) + AMP + diphosphate. Its function is as follows. Catalyzes the attachment of alanine to tRNA(Ala) in a two-step reaction: alanine is first activated by ATP to form Ala-AMP and then transferred to the acceptor end of tRNA(Ala). Also edits incorrectly charged Ser-tRNA(Ala) and Gly-tRNA(Ala) via its editing domain. This Synechococcus sp. (strain JA-3-3Ab) (Cyanobacteria bacterium Yellowstone A-Prime) protein is Alanine--tRNA ligase.